A 750-amino-acid chain; its full sequence is MLRAKNQLFLLSPHYLRQVKESSGSRLIQQRLLHQQQPLHPEWAALAKKQLKGKNPEDLIWHTPEGISIKPLYSKRDTMDLPEELPGVKPFTRGPYPTMYTFRPWTIRQYAGFSTVEESNKFYKDNIKAGQQGLSVAFDLATHRGYDSDNPRLRGDVGMAGVAIDTVEDTKILFDGIPLEKMSVSMTMNGAVIPVLATFIVTGEEQGVPKEKLTGTIQNDILKEFMVRNTYIFPPEPSMKIIADIFQYTAKHMPKFNSISISGYHMQEAGADAILELAYTIADGLEYCRTGLQAGLTIDEFAPRLSFFWGIGMNFYMEIAKMRAGRRLWAHLIEKMLQPKNSKSLLLRAHCQTSGWSLTEQDPYNNIIRTTIEAMAAVFGGTQSLHTNSFDEALGLPTVKSARIARNTQIIIQEESGIPKVADPWGGSYMMESLTNDIYDAALKLINEIEEMGGMAKAVAEGIPKLRIEECAARRQARIDSGSEVIVGVNKYQLEKEESVDVLAIDNTSVRNKQIEKLKKVKSSRDQALAERCLDALTACAASGDGNILALAVDATRARCTVGEITYAMKKVFGEHKANDRMVSGAYRQEFGESKEIAFAIKRVEKFMEREGRRPRLLVAKMGQDGHDRGAKVIATGFADLGFDVDIGPLFQTPREVAQQAVDADVHTVGVSTLAAGHKTLVPELIKELNALGRPDILVMCGGVIPPQDYEFLFEVGVSNVFGPGTRIPKAAVQVLDDIEKCLEKKQQSI.

The N-terminal 32 residues, 1 to 32 (MLRAKNQLFLLSPHYLRQVKESSGSRLIQQRL), are a transit peptide targeting the mitochondrion. Residue glutamine 50 participates in malonyl-CoA binding. Lysine 89 bears the N6-acetyllysine mark. Malonyl-CoA is bound by residues 96 to 99 (YPTM) and 106 to 110 (TIRQY). Lysine 212 is modified (N6-acetyllysine). Malonyl-CoA contacts are provided by residues 216–218 (TIQ), arginine 228, lysine 255, histidine 265, and 304–306 (RLS). Lysine 335 carries the post-translational modification N6-acetyllysine. Position 343 is an N6-succinyllysine (lysine 343). Position 481 is a phosphoserine (serine 481). Lysine 595 is modified (N6-succinyllysine). At lysine 602 the chain carries N6-acetyllysine. The B12-binding domain maps to 614–746 (RPRLLVAKMG…DDIEKCLEKK (133 aa)). Adenosylcob(III)alamin is bound at residue histidine 627.

The protein belongs to the methylmalonyl-CoA mutase family. In terms of assembly, homodimer. Interacts (the apoenzyme form) with MMAA; the interaction is GTP dependent. Requires adenosylcob(III)alamin as cofactor.

The protein resides in the mitochondrion matrix. It is found in the mitochondrion. It localises to the cytoplasm. The enzyme catalyses (R)-methylmalonyl-CoA = succinyl-CoA. Inhibited by itaconyl-CoA, a metabolite that inactivates the coenzyme B12 cofactor. In terms of biological role, catalyzes the reversible isomerization of methylmalonyl-CoA (MMCoA) (generated from branched-chain amino acid metabolism and degradation of dietary odd chain fatty acids and cholesterol) to succinyl-CoA (3-carboxypropionyl-CoA), a key intermediate of the tricarboxylic acid cycle. The sequence is that of Methylmalonyl-CoA mutase, mitochondrial (MMUT) from Bos taurus (Bovine).